The sequence spans 65 residues: Small ribosomal subunit protein eS17 (65 aa).

It belongs to the eukaryotic ribosomal protein eS17 family.

In Archaeoglobus fulgidus (strain ATCC 49558 / DSM 4304 / JCM 9628 / NBRC 100126 / VC-16), this protein is Small ribosomal subunit protein eS17.